Reading from the N-terminus, the 488-residue chain is Germacrene A acid 8-beta-hydroxylase (488 aa).

A helical; Signal-anchor for type II membrane protein membrane pass occupies residues 2–22; it reads ELFTIFSIVVSSLILFTFWSL. N-linked (GlcNAc...) asparagine glycosylation is present at Asn-407. Residue Cys-429 participates in heme binding.

The protein belongs to the cytochrome P450 family. Heme serves as cofactor. In terms of tissue distribution, expressed in leaf primordia.

The protein localises to the membrane. It catalyses the reaction germacra-1(10),4,11(13)-trien-12-oate + reduced [NADPH--hemoprotein reductase] + O2 = 8beta-hydroxygermacra-1(10),4,11(13)-trien-12-oate + oxidized [NADPH--hemoprotein reductase] + H2O + H(+). It functions in the pathway secondary metabolite biosynthesis; terpenoid biosynthesis. In terms of biological role, involved in the biosynthesis of germacrene-derived sesquiterpene lactones. Hydroxylates germacrene A acid to 8-beta-hydroxy-germacrene A acid. Unlike 6-alpha-hydroxy-germacrene A acid, this compound cannot undergo spontaneous lactonization. The chain is Germacrene A acid 8-beta-hydroxylase from Helianthus annuus (Common sunflower).